Consider the following 294-residue polypeptide: Probable 2-(5''-triphosphoribosyl)-3'-dephosphocoenzyme-A synthase (294 aa).

This sequence belongs to the CitG/MdcB family.

It carries out the reaction 3'-dephospho-CoA + ATP = 2'-(5''-triphospho-alpha-D-ribosyl)-3'-dephospho-CoA + adenine. The polypeptide is Probable 2-(5''-triphosphoribosyl)-3'-dephosphocoenzyme-A synthase (Streptococcus pyogenes serotype M28 (strain MGAS6180)).